We begin with the raw amino-acid sequence, 657 residues long: Methionine--tRNA ligase (657 aa).

The 'HIGH' region signature appears at 13-23 (YYPSGNLHIGH). The 'KMSKS' region motif lies at 308–312 (KMSKS). Residue K311 participates in ATP binding. Residues 557–657 (DFDKVEIKAA…SAIPNGAVIK (101 aa)) form the tRNA-binding domain.

Belongs to the class-I aminoacyl-tRNA synthetase family. MetG type 2B subfamily. As to quaternary structure, homodimer.

Its subcellular location is the cytoplasm. It carries out the reaction tRNA(Met) + L-methionine + ATP = L-methionyl-tRNA(Met) + AMP + diphosphate. In terms of biological role, is required not only for elongation of protein synthesis but also for the initiation of all mRNA translation through initiator tRNA(fMet) aminoacylation. In Staphylococcus aureus (strain Mu50 / ATCC 700699), this protein is Methionine--tRNA ligase.